The sequence spans 478 residues: Catalase easC (478 aa).

Residue His-54 is part of the active site. Tyr-343 lines the heme pocket. The tract at residues 459–478 is disordered; sequence VAEKARPDSPSRAQPGQLRL.

This sequence belongs to the catalase family. The cofactor is heme.

It functions in the pathway alkaloid biosynthesis; ergot alkaloid biosynthesis. Functionally, catalase; part of the gene cluster that mediates the biosynthesis of fungal ergot alkaloid. DmaW catalyzes the first step of ergot alkaloid biosynthesis by condensing dimethylallyl diphosphate (DMAP) and tryptophan to form 4-dimethylallyl-L-tryptophan. The second step is catalyzed by the methyltransferase easF that methylates 4-dimethylallyl-L-tryptophan in the presence of S-adenosyl-L-methionine, resulting in the formation of 4-dimethylallyl-L-abrine. The catalase easC and the FAD-dependent oxidoreductase easE then transform 4-dimethylallyl-L-abrine to chanoclavine-I which is further oxidized by easD in the presence of NAD(+), resulting in the formation of chanoclavine-I aldehyde. Chanoclavine-I aldehyde is the precursor of ergoamides and ergopeptines in Clavicipitaceae, and clavine-type alcaloids such as fumiclavine in Trichocomaceae. However, the metabolites downstream of chanoclavine-I aldehyde in Arthrodermataceae have not been identified yet. In Trichophyton verrucosum (strain HKI 0517), this protein is Catalase easC.